The following is an 853-amino-acid chain: DNA mismatch repair protein MutS (853 aa).

614-621 (GPNMGGKS) is a binding site for ATP.

Belongs to the DNA mismatch repair MutS family.

Its function is as follows. This protein is involved in the repair of mismatches in DNA. It is possible that it carries out the mismatch recognition step. This protein has a weak ATPase activity. The sequence is that of DNA mismatch repair protein MutS from Escherichia coli (strain SE11).